We begin with the raw amino-acid sequence, 620 residues long: Cilia- and flagella-associated protein 52 (620 aa).

WD repeat units lie at residues 62-106, 109-150, 156-195, 288-327, 330-369, 372-411, 415-454, 459-498, 500-539, 543-582, and 585-620; these read GHGN…LLAR, LHKG…AICG, LNVG…RKIW, QLQG…ETLI, CHFD…ELLR, VPNM…LMYV, AHRI…QKLE, EHKS…RNQM, LANT…VIRE, SLSG…VTHV, and GHSG…PYTS.

The protein belongs to the CFAP52 family. As to quaternary structure, microtubule inner protein component of sperm flagellar doublet microtubules. Interacts with BRCA2. Interacts with the CCT chaperonin complex. Interacts with HSP70. Interacts with AK8. Interacts with CFAP45. Interacts with DNAI1. Interacts with IQDC. As to expression, expressed in respiratory cells and sperm (at protein level). Highly expressed in testis. Up-regulated in hepatocellular carcinoma (HCC).

The protein localises to the cytoplasm. It is found in the cytoskeleton. It localises to the cilium axoneme. Its subcellular location is the flagellum axoneme. In terms of biological role, microtubule inner protein (MIP) part of the dynein-decorated doublet microtubules (DMTs) in cilia axoneme. Important for proper ciliary and flagellar beating. May act in cooperation with CFAP45 and axonemal dynein subunit DNAH11. May play a role in cell growth and/or survival. The polypeptide is Cilia- and flagella-associated protein 52 (Homo sapiens (Human)).